A 437-amino-acid polypeptide reads, in one-letter code: Ribosomal protein uS12 methylthiotransferase RimO (437 aa).

The 111-residue stretch at 4 to 114 (PRVSFVSLGC…VMNAVHEVAP (111 aa)) folds into the MTTase N-terminal domain. [4Fe-4S] cluster-binding residues include Cys13, Cys49, Cys78, Cys145, Cys149, and Cys152. Residues 131–369 (LTPRHYAYLK…MAKQQQISTN (239 aa)) form the Radical SAM core domain. The 66-residue stretch at 372 to 437 (KKKVGKRLPV…DAYDLHGTAV (66 aa)) folds into the TRAM domain.

Belongs to the methylthiotransferase family. RimO subfamily. [4Fe-4S] cluster is required as a cofactor.

The protein resides in the cytoplasm. The catalysed reaction is L-aspartate(89)-[ribosomal protein uS12]-hydrogen + (sulfur carrier)-SH + AH2 + 2 S-adenosyl-L-methionine = 3-methylsulfanyl-L-aspartate(89)-[ribosomal protein uS12]-hydrogen + (sulfur carrier)-H + 5'-deoxyadenosine + L-methionine + A + S-adenosyl-L-homocysteine + 2 H(+). In terms of biological role, catalyzes the methylthiolation of an aspartic acid residue of ribosomal protein uS12. This is Ribosomal protein uS12 methylthiotransferase RimO from Brucella abortus (strain S19).